The following is a 237-amino-acid chain: D-aminoacyl-tRNA deacylase (237 aa).

The protein belongs to the DtdA deacylase family. In terms of assembly, monomer. Requires Zn(2+) as cofactor.

The enzyme catalyses a D-aminoacyl-tRNA + H2O = a tRNA + a D-alpha-amino acid + H(+). The catalysed reaction is glycyl-tRNA(Ala) + H2O = tRNA(Ala) + glycine + H(+). Its function is as follows. D-aminoacyl-tRNA deacylase with broad substrate specificity. By recycling D-aminoacyl-tRNA to D-amino acids and free tRNA molecules, this enzyme counteracts the toxicity associated with the formation of D-aminoacyl-tRNA entities in vivo. This is D-aminoacyl-tRNA deacylase from Metallosphaera sedula (strain ATCC 51363 / DSM 5348 / JCM 9185 / NBRC 15509 / TH2).